The chain runs to 199 residues: Ciliary neurotrophic factor (199 aa).

It belongs to the CNTF family. As to expression, nervous system.

It is found in the cytoplasm. CNTF is a survival factor for various neuronal cell types. Seems to prevent the degeneration of motor axons after axotomy. The chain is Ciliary neurotrophic factor (CNTF) from Oryctolagus cuniculus (Rabbit).